The primary structure comprises 591 residues: Aspartate--tRNA(Asp/Asn) ligase (591 aa).

An L-aspartate-binding site is contributed by Glu174. The aspartate stretch occupies residues 198 to 201 (QLFK). Residue Arg220 participates in L-aspartate binding. Residues 220–222 (RDE) and Gln229 each bind ATP. His450 lines the L-aspartate pocket. ATP is bound at residue Glu483. An L-aspartate-binding site is contributed by Arg490. 535–538 (GLDR) contacts ATP.

This sequence belongs to the class-II aminoacyl-tRNA synthetase family. Type 1 subfamily. In terms of assembly, homodimer.

It localises to the cytoplasm. The catalysed reaction is tRNA(Asx) + L-aspartate + ATP = L-aspartyl-tRNA(Asx) + AMP + diphosphate. Aspartyl-tRNA synthetase with relaxed tRNA specificity since it is able to aspartylate not only its cognate tRNA(Asp) but also tRNA(Asn). Reaction proceeds in two steps: L-aspartate is first activated by ATP to form Asp-AMP and then transferred to the acceptor end of tRNA(Asp/Asn). This is Aspartate--tRNA(Asp/Asn) ligase from Pseudomonas putida (strain ATCC 700007 / DSM 6899 / JCM 31910 / BCRC 17059 / LMG 24140 / F1).